A 304-amino-acid polypeptide reads, in one-letter code: ATP synthase gamma chain (304 aa).

Belongs to the ATPase gamma chain family. F-type ATPases have 2 components, CF(1) - the catalytic core - and CF(0) - the membrane proton channel. CF(1) has five subunits: alpha(3), beta(3), gamma(1), delta(1), epsilon(1). CF(0) has three main subunits: a, b and c.

Its subcellular location is the cell membrane. Functionally, produces ATP from ADP in the presence of a proton gradient across the membrane. The gamma chain is believed to be important in regulating ATPase activity and the flow of protons through the CF(0) complex. This chain is ATP synthase gamma chain, found in Mycobacterium ulcerans (strain Agy99).